A 133-amino-acid polypeptide reads, in one-letter code: ATP synthase epsilon chain (133 aa).

It belongs to the ATPase epsilon chain family. As to quaternary structure, F-type ATPases have 2 components, CF(1) - the catalytic core - and CF(0) - the membrane proton channel. CF(1) has five subunits: alpha(3), beta(3), gamma(1), delta(1), epsilon(1). CF(0) has three main subunits: a, b and c.

The protein resides in the cell membrane. Its function is as follows. Produces ATP from ADP in the presence of a proton gradient across the membrane. The protein is ATP synthase epsilon chain of Bacillus mycoides (strain KBAB4) (Bacillus weihenstephanensis).